The primary structure comprises 193 residues: Peptidyl-tRNA hydrolase (193 aa).

Residue Y16 coordinates tRNA. Residue H21 is the Proton acceptor of the active site. Positions 66, 68, and 114 each coordinate tRNA.

It belongs to the PTH family. In terms of assembly, monomer.

It localises to the cytoplasm. The enzyme catalyses an N-acyl-L-alpha-aminoacyl-tRNA + H2O = an N-acyl-L-amino acid + a tRNA + H(+). Functionally, hydrolyzes ribosome-free peptidyl-tRNAs (with 1 or more amino acids incorporated), which drop off the ribosome during protein synthesis, or as a result of ribosome stalling. In terms of biological role, catalyzes the release of premature peptidyl moieties from peptidyl-tRNA molecules trapped in stalled 50S ribosomal subunits, and thus maintains levels of free tRNAs and 50S ribosomes. The sequence is that of Peptidyl-tRNA hydrolase from Pelobacter propionicus (strain DSM 2379 / NBRC 103807 / OttBd1).